Consider the following 341-residue polypeptide: Anthranilate phosphoribosyltransferase (341 aa).

Residues Gly84, 87–88 (GD), Thr92, 94–97 (NVTT), 112–120 (KCGNRSVSS), and Ser124 contribute to the 5-phospho-alpha-D-ribose 1-diphosphate site. Gly84 contacts anthranilate. Thr96 contributes to the Mg(2+) binding site. Position 115 (Asn115) interacts with anthranilate. Arg170 contacts anthranilate. Mg(2+) contacts are provided by Asp228 and Glu229.

It belongs to the anthranilate phosphoribosyltransferase family. Homodimer. It depends on Mg(2+) as a cofactor.

It catalyses the reaction N-(5-phospho-beta-D-ribosyl)anthranilate + diphosphate = 5-phospho-alpha-D-ribose 1-diphosphate + anthranilate. Its pathway is amino-acid biosynthesis; L-tryptophan biosynthesis; L-tryptophan from chorismate: step 2/5. Catalyzes the transfer of the phosphoribosyl group of 5-phosphorylribose-1-pyrophosphate (PRPP) to anthranilate to yield N-(5'-phosphoribosyl)-anthranilate (PRA). The polypeptide is Anthranilate phosphoribosyltransferase (Corynebacterium diphtheriae (strain ATCC 700971 / NCTC 13129 / Biotype gravis)).